Reading from the N-terminus, the 107-residue chain is U1-lycotoxin-Ls1t (107 aa).

The first 20 residues, 1-20 (MMKVLVVVALLVTLISYSSS), serve as a signal peptide directing secretion. The propeptide occupies 21–41 (EGIDDLEADELLSLMANEQTR). 4 disulfide bridges follow: C44-C59, C51-C68, C58-C86, and C70-C84.

This sequence belongs to the neurotoxin 19 (CSTX) family. 04 (U1-Lctx) subfamily. Expressed by the venom gland.

The protein localises to the secreted. The sequence is that of U1-lycotoxin-Ls1t from Lycosa singoriensis (Wolf spider).